The chain runs to 84 residues: Cytochrome b559 subunit alpha (84 aa).

The Cytoplasmic segment spans residues 2 to 20 (AGTTGERPFSDIITSVRYW). A helical membrane pass occupies residues 21 to 35 (VIHSITIPALFIAGW). His23 contacts heme. Topologically, residues 36 to 84 (LFVSTGLAYDVFGTPRPDSYYAQEQRSIPLVTDRFEAKQQVETFLEQLK) are lumenal.

This sequence belongs to the PsbE/PsbF family. In terms of assembly, heterodimer of an alpha subunit and a beta subunit. PSII is composed of 1 copy each of membrane proteins PsbA, PsbB, PsbC, PsbD, PsbE, PsbF, PsbH, PsbI, PsbJ, PsbK, PsbL, PsbM, PsbT, PsbX, PsbY, PsbZ, Psb30/Ycf12, peripheral proteins PsbO, CyanoQ (PsbQ), PsbU, PsbV and a large number of cofactors. It forms dimeric complexes. The cofactor is heme b.

It localises to the cellular thylakoid membrane. This b-type cytochrome is tightly associated with the reaction center of photosystem II (PSII). PSII is a light-driven water:plastoquinone oxidoreductase that uses light energy to abstract electrons from H(2)O, generating O(2) and a proton gradient subsequently used for ATP formation. It consists of a core antenna complex that captures photons, and an electron transfer chain that converts photonic excitation into a charge separation. The chain is Cytochrome b559 subunit alpha from Thermostichus vulcanus (Synechococcus vulcanus).